The chain runs to 331 residues: D-alanine--D-alanine ligase (331 aa).

One can recognise an ATP-grasp domain in the interval 122–328; the sequence is KLWYDAIGIP…FHEFLADCIE (207 aa). 152–207 serves as a coordination point for ATP; sequence AFDKWGKLFVKAARQGSSVGCYSVTKIEQLSDAIDKAFGFSHQVLVEKAVKPRELE. Mg(2+) is bound by residues D282, E295, and N297.

It belongs to the D-alanine--D-alanine ligase family. The cofactor is Mg(2+). Mn(2+) is required as a cofactor.

Its subcellular location is the cytoplasm. It catalyses the reaction 2 D-alanine + ATP = D-alanyl-D-alanine + ADP + phosphate + H(+). Its pathway is cell wall biogenesis; peptidoglycan biosynthesis. Functionally, cell wall formation. The sequence is that of D-alanine--D-alanine ligase from Vibrio vulnificus (strain CMCP6).